The chain runs to 860 residues: Transforming growth factor-beta receptor-associated protein 1 (860 aa).

The region spanning 24 to 297 is the CNH domain; sequence RVNIECVECC…HILQDFEGRV (274 aa). The CHCR repeat unit spans residues 564–728; sequence RPLDEQQKNS…LLAIYLHAGP (165 aa).

It belongs to the TRAP1 family. As to quaternary structure, interacts with TGFBR2 and ACVR2B; in the absence of ligand stimulation. Interacts with TGFBR1, ACVRL1, BMPR1A and ACVR1B; in the absence of ligand stimulation and to a less extent. Interacts with SMAD4; the interaction seems to be mutually exclusive with the interaction of SMAD4 and phosphorylated SMAD2. May interact with ALOX5. Interacts with RAB5C. Interacts with VPS8, VPS11 and VPS16. Component of the putative class C core vacuole/endosome tethering (CORVET) complex; the core of which composed of the class C Vps proteins VPS11, VPS16, VPS18 and VPS33A, is associated with VPS8 and TGFBRAP1.

It is found in the cytoplasm. The protein localises to the early endosome. In terms of biological role, plays a role in the TGF-beta/activin signaling pathway. It associates with inactive heteromeric TGF-beta and activin receptor complexes, mainly through the type II receptor, and is released upon activation of signaling. May recruit SMAD4 to the vicinity of the receptor complex and facilitate its interaction with receptor-regulated Smads, such as SMAD2. Functionally, plays a role in vesicle-mediated protein trafficking of the endocytic membrane transport pathway. Believed to act as a component of the putative CORVET endosomal tethering complexes which is proposed to be involved in the Rab5-to-Rab7 endosome conversion probably implicating MON1A/B, and via binding SNAREs and SNARE complexes to mediate tethering and docking events during SNARE-mediated membrane fusion. The CORVET complex is proposed to function as a Rab5 effector to mediate early endosome fusion probably in specific endosome subpopulations. Functions predominantly in APPL1-containing endosomes and in degradative but not recycling trafficking of endocytosed cargo. The chain is Transforming growth factor-beta receptor-associated protein 1 (TGFBRAP1) from Homo sapiens (Human).